A 928-amino-acid polypeptide reads, in one-letter code: Dual serine/threonine and tyrosine protein kinase (928 aa).

Positions 1-14 (MEGDGVPWGSEPES) are enriched in low complexity. 2 disordered regions span residues 1–22 (MEGD…GGGG) and 55–81 (LRGS…AGDV). Residues 394 to 430 (RKKENELYESLMNIANRKQEEMKDMIVETLNTMKEEL) adopt a coiled-coil conformation. The Protein kinase domain maps to 651 to 905 (PKLGQELGRG…PLLGIVQPML (255 aa)). Residues 657–665 (LGRGQYGVV) and K680 each bind ATP. D776 serves as the catalytic Proton acceptor.

It belongs to the protein kinase superfamily. Ser/Thr protein kinase family.

The protein resides in the cytoplasm. It is found in the cell membrane. The protein localises to the apical cell membrane. Its subcellular location is the basolateral cell membrane. It localises to the cell junction. The enzyme catalyses L-seryl-[protein] + ATP = O-phospho-L-seryl-[protein] + ADP + H(+). It carries out the reaction L-threonyl-[protein] + ATP = O-phospho-L-threonyl-[protein] + ADP + H(+). It catalyses the reaction L-tyrosyl-[protein] + ATP = O-phospho-L-tyrosyl-[protein] + ADP + H(+). Functionally, acts as a positive regulator of ERK phosphorylation downstream of fibroblast growth factor-receptor activation. Involved in the regulation of both caspase-dependent apoptosis and caspase-independent cell death. In the skin, it plays a predominant role in suppressing caspase-dependent apoptosis in response to UV stress in a range of dermal cell types. The polypeptide is Dual serine/threonine and tyrosine protein kinase (DSTYK) (Bos taurus (Bovine)).